Here is a 231-residue protein sequence, read N- to C-terminus: Orotidine 5'-phosphate decarboxylase (231 aa).

Residues aspartate 11, lysine 33, 60–69 (DLKFHDIPNT), threonine 117, arginine 178, glutamine 187, glycine 207, and arginine 208 contribute to the substrate site. Residue lysine 62 is the Proton donor of the active site.

It belongs to the OMP decarboxylase family. Type 1 subfamily. Homodimer.

It carries out the reaction orotidine 5'-phosphate + H(+) = UMP + CO2. It participates in pyrimidine metabolism; UMP biosynthesis via de novo pathway; UMP from orotate: step 2/2. Catalyzes the decarboxylation of orotidine 5'-monophosphate (OMP) to uridine 5'-monophosphate (UMP). This chain is Orotidine 5'-phosphate decarboxylase, found in Nitrosomonas europaea (strain ATCC 19718 / CIP 103999 / KCTC 2705 / NBRC 14298).